The primary structure comprises 339 residues: Glycerol-3-phosphate dehydrogenase [NAD(P)+] (339 aa).

Positions 15, 16, 36, and 110 each coordinate NADPH. Sn-glycerol 3-phosphate-binding residues include K110, G139, and T141. A143 serves as a coordination point for NADPH. Residues K195, D248, S258, R259, and N260 each contribute to the sn-glycerol 3-phosphate site. K195 (proton acceptor) is an active-site residue. R259 is an NADPH binding site. 2 residues coordinate NADPH: V283 and E285.

Belongs to the NAD-dependent glycerol-3-phosphate dehydrogenase family.

The protein localises to the cytoplasm. It catalyses the reaction sn-glycerol 3-phosphate + NAD(+) = dihydroxyacetone phosphate + NADH + H(+). The catalysed reaction is sn-glycerol 3-phosphate + NADP(+) = dihydroxyacetone phosphate + NADPH + H(+). It functions in the pathway membrane lipid metabolism; glycerophospholipid metabolism. In terms of biological role, catalyzes the reduction of the glycolytic intermediate dihydroxyacetone phosphate (DHAP) to sn-glycerol 3-phosphate (G3P), the key precursor for phospholipid synthesis. In Erwinia tasmaniensis (strain DSM 17950 / CFBP 7177 / CIP 109463 / NCPPB 4357 / Et1/99), this protein is Glycerol-3-phosphate dehydrogenase [NAD(P)+].